Here is a 305-residue protein sequence, read N- to C-terminus: MLDTSIQALINKWQKYLVLQRNYSNHTVISYNNDLKHFLEFMNYYNSELVTINHIKTADIRLIRSWLAKRNCDNFTASSISRGLSAVKNFYRFLEKTTQLNSHIIFSIKSPKKTKLLPKALSEDDVVISLEHIEEYGNVKWVELRNKALLVLIYASGLRISEALSITKLHLQNLEFIRIIGKGSKERIIPWLPIAKNLITQYLEILPYKLGDNEPIFRGKQGKELQPSVFNRELIKLKHFYGLPQHLTAHSFRHSFASHLLEHGADLRSLQELLGHKSLSTTQNYTKTSIKHLEAVYTTAYPIKK.

A Core-binding (CB) domain is found at 4-95 (TSIQALINKW…AVKNFYRFLE (92 aa)). The Tyr recombinase domain occupies 116-298 (LLPKALSEDD…SIKHLEAVYT (183 aa)). Residues arginine 159, lysine 182, histidine 250, arginine 253, and histidine 276 contribute to the active site. Tyrosine 285 (O-(3'-phospho-DNA)-tyrosine intermediate) is an active-site residue.

It belongs to the 'phage' integrase family. XerC subfamily. As to quaternary structure, forms a cyclic heterotetrameric complex composed of two molecules of XerC and two molecules of XerD.

Its subcellular location is the cytoplasm. Functionally, site-specific tyrosine recombinase, which acts by catalyzing the cutting and rejoining of the recombining DNA molecules. The XerC-XerD complex is essential to convert dimers of the bacterial chromosome into monomers to permit their segregation at cell division. It also contributes to the segregational stability of plasmids. The polypeptide is Tyrosine recombinase XerC (Rickettsia peacockii (strain Rustic)).